A 72-amino-acid chain; its full sequence is Cell division protein ZapB (72 aa).

Positions 5–71 form a coiled coil; sequence ILDQLEEKIK…LRSLLGQIDN (67 aa).

This sequence belongs to the ZapB family. In terms of assembly, homodimer. The ends of the coiled-coil dimer bind to each other, forming polymers. Interacts with FtsZ.

Its subcellular location is the cytoplasm. Functionally, non-essential, abundant cell division factor that is required for proper Z-ring formation. It is recruited early to the divisome by direct interaction with FtsZ, stimulating Z-ring assembly and thereby promoting cell division earlier in the cell cycle. Its recruitment to the Z-ring requires functional FtsA or ZipA. The chain is Cell division protein ZapB from Actinobacillus pleuropneumoniae serotype 5b (strain L20).